The following is a 173-amino-acid chain: Gamma-crystallin S-1 (173 aa).

Beta/gamma crystallin 'Greek key' domains follow at residues 2 to 40 (GKII…RVES) and 41 to 83 (DWWV…RMLP). The tract at residues 84 to 88 (HTGRS) is connecting peptide. 2 Beta/gamma crystallin 'Greek key' domains span residues 89-129 (YRMR…QVMD) and 130-172 (GYWI…RRIM).

The protein belongs to the beta/gamma-crystallin family.

Crystallins are the dominant structural components of the vertebrate eye lens. This Chiloscyllium indicum (Slender bamboo shark) protein is Gamma-crystallin S-1 (GS-1).